The sequence spans 313 residues: Pantothenate synthetase (313 aa).

43–50 (MGALHEGH) is an ATP binding site. H50 (proton donor) is an active-site residue. Position 75 (Q75) interacts with (R)-pantoate. Beta-alanine is bound at residue Q75. An ATP-binding site is contributed by 161–164 (GEKD). Q167 is a binding site for (R)-pantoate. Residues V190 and 198-201 (LSSR) contribute to the ATP site.

It belongs to the pantothenate synthetase family. In terms of assembly, homodimer.

The protein localises to the cytoplasm. It catalyses the reaction (R)-pantoate + beta-alanine + ATP = (R)-pantothenate + AMP + diphosphate + H(+). It functions in the pathway cofactor biosynthesis; (R)-pantothenate biosynthesis; (R)-pantothenate from (R)-pantoate and beta-alanine: step 1/1. Its function is as follows. Catalyzes the condensation of pantoate with beta-alanine in an ATP-dependent reaction via a pantoyl-adenylate intermediate. The protein is Pantothenate synthetase of Mycobacterium sp. (strain KMS).